A 409-amino-acid chain; its full sequence is Putative lipoate-protein ligase A (409 aa).

Positions 146-330 (GPDNCRLLFY…RFQKTFKVDG (185 aa)) constitute a BPL/LPL catalytic domain. ATP is bound by residues arginine 188, 193-196 (GTVL), and lysine 249. A (R)-lipoate-binding site is contributed by lysine 249.

It belongs to the LplA family. Monomer.

It carries out the reaction L-lysyl-[lipoyl-carrier protein] + (R)-lipoate + ATP = N(6)-[(R)-lipoyl]-L-lysyl-[lipoyl-carrier protein] + AMP + diphosphate + H(+). It functions in the pathway protein modification; protein lipoylation via exogenous pathway; protein N(6)-(lipoyl)lysine from lipoate: step 1/2. Its pathway is protein modification; protein lipoylation via exogenous pathway; protein N(6)-(lipoyl)lysine from lipoate: step 2/2. Functionally, catalyzes both the ATP-dependent activation of exogenously supplied lipoate to lipoyl-AMP and the transfer of the activated lipoyl onto the lipoyl domains of lipoate-dependent enzymes. The chain is Putative lipoate-protein ligase A (AIM22) from Saccharomyces cerevisiae (strain ATCC 204508 / S288c) (Baker's yeast).